A 430-amino-acid chain; its full sequence is MASSTIISRKMIKLLSPTPSSLRCHKLSFMDHINFPLHSPYAFFYPKIPQNYSNKISQVLENSLSKVLSFYYPLAGKINNNYTYVDCNDTGAEYLNVRIDCPMSQILNHPYNDVVDVVFPQDLPWSSSSLTRSPLVVQLSHFDCGGVAVSACTSHTIFDGYCLSKFINDWASTARNMEFKPSPQFNASTFFPLPSETNLSSTLPATRPSQRHVSRMYNFSSSNLTRLKDIVTKESHVKNPTRVEVASALVHKCGVTMSMESSGMFKPTLMSHAMNLRPPIPLNTMGNATCIILTTAMTEDEVKLPNFVAKLQKDKQQLRDKLKDMKEDRMPLYTLELGKNAMNIIEKDTHDVYLCSGMTNTGLHKIDFGWGEPVRVTLATHPNKNNFIFMDEQSGDGLNVLITLTKDDMLKFQSNKELLEFASPVVESTK.

Catalysis depends on proton acceptor residues H155 and D367.

It belongs to the plant acyltransferase family. As to quaternary structure, monomer. Expressed in tip cells of type I trichomes of stems and petioles, sites of acylsugars production.

In terms of biological role, catalyzes the transfer of short (four to five carbons) branched acyl chains to the furanose ring of di-acylsucrose acceptors to produce tri-acylsucroses such as S3:15 (5,5,5), S4:17 (2,5,5,5) and S4:24 (2,5,5,12) acylsucroses. The protein is Acylsugar acyltransferase 3 of Solanum lycopersicum (Tomato).